Here is a 562-residue protein sequence, read N- to C-terminus: Arginine--tRNA ligase (562 aa).

The 'HIGH' region motif lies at 130–140 (ANPTGPLHIGH).

It belongs to the class-I aminoacyl-tRNA synthetase family. Monomer.

Its subcellular location is the cytoplasm. The enzyme catalyses tRNA(Arg) + L-arginine + ATP = L-arginyl-tRNA(Arg) + AMP + diphosphate. This Geobacter metallireducens (strain ATCC 53774 / DSM 7210 / GS-15) protein is Arginine--tRNA ligase.